The sequence spans 81 residues: UPF0349 protein SE_0633 (81 aa).

Belongs to the UPF0349 family.

In Staphylococcus epidermidis (strain ATCC 12228 / FDA PCI 1200), this protein is UPF0349 protein SE_0633.